Here is a 209-residue protein sequence, read N- to C-terminus: Tumor suppressor candidate gene 1 protein (209 aa).

3 disordered regions span residues 1–55 (MWRM…DGAR), 111–157 (ALRL…LRAR), and 172–209 (LHLE…GPWL). Residues 14-47 (CCGGDGAADGRGPGRSGRARGGGSPSGGGGGVGW) show a composition bias toward gly residues. Residues 70-114 (LEAIRARDEWDRQNARLRQENARLRLENRRLKRENRSLFRQALRL) adopt a coiled-coil conformation. Basic and acidic residues predominate over residues 125-149 (EARRVPEEASTNRRARDSGREDEPG). At serine 150 the chain carries Phosphoserine. Residues 152-177 (RALRARLEKLEAMYRRALLQLHLEQR) adopt a coiled-coil conformation. Residues 174–188 (LEQRGPRPSGDKEEQ) show a composition bias toward basic and acidic residues.

As to expression, widely expressed at low level. Expressed at higher level in testis, weakly expressed in muscle, colon, lung and spleen. Not detected in 3 non small cell lung carcinoma (NSCLC) cell lines with homozygous deletion of the 9p region, while it is down-regulated in 3 other tumor cell lines.

In Homo sapiens (Human), this protein is Tumor suppressor candidate gene 1 protein (TUSC1).